A 557-amino-acid polypeptide reads, in one-letter code: Tight junction-associated protein 1 (557 aa).

The tract at residues 1-37 (MTSAAPAKKPYRKAPPEHRELRLEIPGSRLEQEEPLT) is disordered. T2 carries the post-translational modification N-acetylthreonine. The segment covering 14-23 (APPEHRELRL) has biased composition (basic and acidic residues). Positions 42–171 (MKLLQEENEE…EELNERYRLD (130 aa)) form a coiled coil. Disordered regions lie at residues 266–303 (MSEGVPGDPASPPAPGSPTPQPNGECHSLGTARGSPEE) and 309–328 (AFEKLNPYPTPSPPHPLYPG). A compositionally biased stretch (pro residues) spans 274–286 (PASPPAPGSPTPQ). Phosphoserine is present on S300. Positions 316-325 (YPTPSPPHPL) are enriched in pro residues. T318 is modified (phosphothreonine). Phosphoserine is present on residues S320 and S345. The segment at 364-409 (EEGSERARPSPVPSTPASAQASPHHQPSPAPLTLSAPASSASSEED) is disordered. The span at 378–388 (TPASAQASPHH) shows a compositional bias: polar residues. Residues 394–405 (PLTLSAPASSAS) show a composition bias toward low complexity. T422 is modified (phosphothreonine). Over residues 439-456 (LPELQRHFAHSPADRDEV) the composition is skewed to basic and acidic residues. The segment at 439–557 (LPELQRHFAH…QAQEQGNLLN (119 aa)) is disordered. S491 carries the phosphoserine modification. Over residues 530–542 (RSPKRMGVHHLHR) the composition is skewed to basic residues. S545 carries the phosphoserine modification. Positions 546-557 (LTQAQEQGNLLN) are enriched in polar residues.

Interacts with DLG1. Interacts with ARF6 (GTP-bound form). In terms of tissue distribution, ubiquitously expressed.

The protein resides in the golgi apparatus. It is found in the trans-Golgi network. Its subcellular location is the cell junction. The protein localises to the tight junction. It localises to the cell membrane. In terms of biological role, plays a role in regulating the structure of the Golgi apparatus. In Homo sapiens (Human), this protein is Tight junction-associated protein 1.